The sequence spans 218 residues: Kynurenine formamidase (218 aa).

Substrate is bound at residue Trp27. 3 residues coordinate Zn(2+): His57, His61, and Asp63. The active-site Proton donor/acceptor is the His67. His169 and Glu181 together coordinate Zn(2+).

This sequence belongs to the Cyclase 1 superfamily. KynB family. In terms of assembly, homodimer. Zn(2+) serves as cofactor.

The enzyme catalyses N-formyl-L-kynurenine + H2O = L-kynurenine + formate + H(+). It functions in the pathway amino-acid degradation; L-tryptophan degradation via kynurenine pathway; L-kynurenine from L-tryptophan: step 2/2. Inhibited by EDTA. Insensitive to phenylmethylsulfonyl fluoride (PMSF). In terms of biological role, catalyzes the hydrolysis of N-formyl-L-kynurenine to L-kynurenine, the second step in the kynurenine pathway of tryptophan degradation. This Cupriavidus metallidurans (strain ATCC 43123 / DSM 2839 / NBRC 102507 / CH34) (Ralstonia metallidurans) protein is Kynurenine formamidase.